Consider the following 76-residue polypeptide: Small ribosomal subunit protein bS18 (76 aa).

Belongs to the bacterial ribosomal protein bS18 family. Part of the 30S ribosomal subunit. Forms a tight heterodimer with protein bS6.

Its function is as follows. Binds as a heterodimer with protein bS6 to the central domain of the 16S rRNA, where it helps stabilize the platform of the 30S subunit. This is Small ribosomal subunit protein bS18 from Tolumonas auensis (strain DSM 9187 / NBRC 110442 / TA 4).